The primary structure comprises 507 residues: Proton-coupled zinc antiporter SLC30A1 (507 aa).

At 1–10 the chain is on the cytoplasmic side; it reads MGCWGRNRGR. Residues 11 to 31 traverse the membrane as a helical segment; sequence LLCMLALTFMFMVLEVVVSRV. The Extracellular portion of the chain corresponds to 32–35; that stretch reads TSSL. The chain crosses the membrane as a helical span at residues 36–56; the sequence is AMLSDSFHMLSDVLALVVALV. Zn(2+)-binding residues include His43 and Asp47. Topologically, residues 57 to 78 are cytoplasmic; it reads AERFARRTHATQKNTFGWIRAE. The helical transmembrane segment at 79 to 99 threads the bilayer; that stretch reads VMGALVNAIFLTGLCFAILLE. At 100–113 the chain is on the extracellular side; sequence AIERFIEPHEMQQP. Residues 114 to 134 traverse the membrane as a helical segment; that stretch reads LVVLGVGVAGLLVNVLGLCLF. Residues 135–248 lie on the Cytoplasmic side of the membrane; it reads HHHSGFSQDS…RAGQLNMRGV (114 aa). Residues 142-217 form a disordered region; the sequence is QDSGHGHSHG…DPENPRSGDT (76 aa). Residues 146–158 are 6 X 2 AA approximate repeats of H-G; that stretch reads HGHSHGGHGHGHG. Basic residues predominate over residues 147-167; it reads GHSHGGHGHGHGLPKGPRVKS. The segment covering 189–201 has biased composition (polar residues); sequence TNTLVANTSNSNG. Residues 249-269 form a helical membrane-spanning segment; sequence FLHVLGDALGSVIVVVNALVF. Positions 251 and 255 each coordinate Zn(2+). Over 270 to 308 the chain is Extracellular; the sequence is YFSWKGCSEGDFCVNPCFPDPCKAFVEIINSTHASVYEA. N-linked (GlcNAc...) asparagine glycosylation is present at Asn299. The chain crosses the membrane as a helical span at residues 309–329; sequence GPCWVLYLDPTLCVVMVCILL. Residues 330-507 lie on the Cytoplasmic side of the membrane; sequence YTTYPLLKES…MPNKQPESSL (178 aa). Position 506 is a phosphoserine (Ser506).

This sequence belongs to the cation diffusion facilitator (CDF) transporter (TC 2.A.4) family. SLC30A subfamily. As to quaternary structure, homodimer. Interacts with TMEM163. Interacts and forms a complex with TMC6 and TMC8; the interaction regulates zinc transport into the ER. In terms of assembly, (Microbial infection) Interacts with human papillomavirus 16/HPV16 protein E5; the interaction alleviates SLC30A1-mediated transcription factors inhibition. In terms of processing, N-glycosylated at Asn-299. N-glycosylation promotes endocytosis and degradation through the proteasomal or lysosomal pathways.

The protein resides in the cell membrane. The protein localises to the basolateral cell membrane. It localises to the cytoplasmic vesicle membrane. It is found in the cytoplasm. Its subcellular location is the endoplasmic reticulum membrane. The protein resides in the golgi apparatus membrane. The protein localises to the nucleus membrane. It catalyses the reaction Zn(2+)(in) + 2 H(+)(out) = Zn(2+)(out) + 2 H(+)(in). Its function is as follows. Zinc ion:proton antiporter that could function at the plasma membrane mediating zinc efflux from cells against its electrochemical gradient protecting them from intracellular zinc accumulation and toxicity. Alternatively, could prevent the transport to the plasma membrane of CACNB2, the L-type calcium channels regulatory subunit, through a yet to be defined mechanism. By modulating the expression of these channels at the plasma membrane, could prevent calcium and zinc influx into cells. By the same mechanism, could also prevent L-type calcium channels-mediated heavy metal influx into cells. In some cells, could also function as a zinc ion:proton antiporter mediating zinc entry into the lumen of cytoplasmic vesicles. In macrophages, can increase zinc ions concentration into the lumen of cytoplasmic vesicles containing engulfed bacteria and could help inactivate them. Forms a complex with TMC6/EVER1 and TMC8/EVER2 at the ER membrane of keratynocytes which facilitates zinc uptake into the ER. Down-regulates the activity of transcription factors induced by zinc and cytokines. The sequence is that of Proton-coupled zinc antiporter SLC30A1 from Homo sapiens (Human).